The following is a 396-amino-acid chain: 1-deoxy-D-xylulose 5-phosphate reductoisomerase (396 aa).

The NADPH site is built by Thr-13, Gly-14, Ser-15, Ile-16, and Asn-127. A 1-deoxy-D-xylulose 5-phosphate-binding site is contributed by Lys-128. Glu-129 contacts NADPH. Asp-153 is a binding site for Mn(2+). 4 residues coordinate 1-deoxy-D-xylulose 5-phosphate: Ser-154, Glu-155, Ser-184, and His-207. Glu-155 is a Mn(2+) binding site. Gly-213 is an NADPH binding site. 1-deoxy-D-xylulose 5-phosphate-binding residues include Ser-220, Asn-225, Lys-226, and Glu-229. Glu-229 is a binding site for Mn(2+).

This sequence belongs to the DXR family. The cofactor is Mg(2+). Mn(2+) serves as cofactor.

The enzyme catalyses 2-C-methyl-D-erythritol 4-phosphate + NADP(+) = 1-deoxy-D-xylulose 5-phosphate + NADPH + H(+). It participates in isoprenoid biosynthesis; isopentenyl diphosphate biosynthesis via DXP pathway; isopentenyl diphosphate from 1-deoxy-D-xylulose 5-phosphate: step 1/6. Catalyzes the NADPH-dependent rearrangement and reduction of 1-deoxy-D-xylulose-5-phosphate (DXP) to 2-C-methyl-D-erythritol 4-phosphate (MEP). The chain is 1-deoxy-D-xylulose 5-phosphate reductoisomerase from Stutzerimonas stutzeri (strain A1501) (Pseudomonas stutzeri).